The following is a 447-amino-acid chain: Glycylpeptide N-tetradecanoyltransferase (447 aa).

Tetradecanoyl-CoA contacts are provided by residues 38-41 (YKFW), 171-173 (LCV), and 179-183 (SKRLA). Leu-447 acts as the Proton acceptor; via carboxylate in catalysis.

Belongs to the NMT family. As to quaternary structure, monomer.

The protein localises to the cytoplasm. It carries out the reaction N-terminal glycyl-[protein] + tetradecanoyl-CoA = N-tetradecanoylglycyl-[protein] + CoA + H(+). Its function is as follows. Adds a myristoyl group to the N-terminal glycine residue of certain cellular proteins. This is Glycylpeptide N-tetradecanoyltransferase (NMT1) from Kluyveromyces lactis (strain ATCC 8585 / CBS 2359 / DSM 70799 / NBRC 1267 / NRRL Y-1140 / WM37) (Yeast).